A 338-amino-acid chain; its full sequence is uncharacterized protein (338 aa).

The signal sequence occupies residues 1–29 (MIKQLYKNITICSLAISTALTVFPATSYA).

This sequence belongs to the aerolysin family.

This is an uncharacterized protein from Staphylococcus aureus (strain Mu50 / ATCC 700699).